The chain runs to 156 residues: Transcription antitermination protein NusB (156 aa).

It belongs to the NusB family.

In terms of biological role, involved in transcription antitermination. Required for transcription of ribosomal RNA (rRNA) genes. Binds specifically to the boxA antiterminator sequence of the ribosomal RNA (rrn) operons. This chain is Transcription antitermination protein NusB, found in Rickettsia felis (strain ATCC VR-1525 / URRWXCal2) (Rickettsia azadi).